The chain runs to 443 residues: Ribosomal protein uS12 methylthiotransferase RimO (443 aa).

Residues 10 to 120 form the MTTase N-terminal domain; the sequence is PRVGFVSLGC…VMQAVHRHLP (111 aa). Positions 19, 55, 84, 151, 155, and 158 each coordinate [4Fe-4S] cluster. A Radical SAM core domain is found at 137–375; it reads LTPQHYAYLK…DFQEDISTQR (239 aa). One can recognise a TRAM domain in the interval 377–443; that stretch reads EAKIGREMTV…IHDLYAERVV (67 aa).

It belongs to the methylthiotransferase family. RimO subfamily. It depends on [4Fe-4S] cluster as a cofactor.

Its subcellular location is the cytoplasm. It catalyses the reaction L-aspartate(89)-[ribosomal protein uS12]-hydrogen + (sulfur carrier)-SH + AH2 + 2 S-adenosyl-L-methionine = 3-methylsulfanyl-L-aspartate(89)-[ribosomal protein uS12]-hydrogen + (sulfur carrier)-H + 5'-deoxyadenosine + L-methionine + A + S-adenosyl-L-homocysteine + 2 H(+). Catalyzes the methylthiolation of an aspartic acid residue of ribosomal protein uS12. In Azoarcus sp. (strain BH72), this protein is Ribosomal protein uS12 methylthiotransferase RimO.